We begin with the raw amino-acid sequence, 121 residues long: Protein PilH (121 aa).

In terms of domain architecture, Response regulatory spans 3 to 119; sequence RILIVDDSPT…TLLKTINAVL (117 aa). Residue Asp52 is modified to 4-aspartylphosphate.

Functionally, may be a part of a signal-transduction system that regulates twitching motility by controlling pilus function (extension and retraction). This is Protein PilH (pilH) from Pseudomonas aeruginosa (strain ATCC 15692 / DSM 22644 / CIP 104116 / JCM 14847 / LMG 12228 / 1C / PRS 101 / PAO1).